The following is a 53-amino-acid chain: UPF0391 membrane protein YtjA (53 aa).

2 consecutive transmembrane segments (helical) span residues 4–24 (WGIIFLVIALIAAALGFGGLA) and 30–48 (AAKIVFVVGIVLFLVSLFM).

The protein belongs to the UPF0391 family.

It is found in the cell membrane. The chain is UPF0391 membrane protein YtjA from Salmonella agona (strain SL483).